We begin with the raw amino-acid sequence, 208 residues long: Probable GTP-binding protein EngB (208 aa).

The 183-residue stretch at 23-205 folds into the EngB-type G domain; the sequence is LTSEMVILGR…RQTLLKYLLT (183 aa). GTP contacts are provided by residues 31–38, 57–61, 84–87, 154–157, and 182–184; these read GRSNVGKS, GKTRL, DLPG, TKFD, and FNA. S38 and T59 together coordinate Mg(2+).

The protein belongs to the TRAFAC class TrmE-Era-EngA-EngB-Septin-like GTPase superfamily. EngB GTPase family. It depends on Mg(2+) as a cofactor.

Functionally, necessary for normal cell division and for the maintenance of normal septation. The polypeptide is Probable GTP-binding protein EngB (Helicobacter pylori (strain P12)).